We begin with the raw amino-acid sequence, 1023 residues long: Cell division cycle-associated protein 2 (1023 aa).

The segment covering Met1–Glu14 has biased composition (basic and acidic residues). The tract at residues Met1–Gly21 is disordered. A phosphoserine mark is found at Ser98, Ser120, Ser126, Ser131, Ser210, Ser291, and Ser309. Residue Thr312 is modified to Phosphothreonine. In terms of domain architecture, PP1-binding spans Lys389–Asp449. Ser400 and Ser407 each carry phosphoserine. Thr412 is modified (phosphothreonine). At Ser437 the chain carries Phosphoserine. Residues Ser542–Glu580 are disordered. Residues Ser561–Val573 are compositionally biased toward basic residues. Phosphoserine occurs at positions 591 and 614. The disordered stretch occupies residues Ser667 to Pro729. Over residues Asn679–Ile691 the composition is skewed to low complexity. A compositionally biased stretch (basic and acidic residues) spans Asn696–Ala706. Phosphoserine occurs at positions 710 and 756. Lys762 is covalently cross-linked (Glycyl lysine isopeptide (Lys-Gly) (interchain with G-Cter in SUMO2)). Basic and acidic residues predominate over residues Glu803–Met816. Disordered stretches follow at residues Glu803–Val860 and Ser936–Gln1023. 2 positions are modified to phosphoserine: Ser936 and Ser977. 2 stretches are compositionally biased toward polar residues: residues Cys979 to Phe992 and Ser1000 to Thr1010. The residue at position 1000 (Ser1000) is a Phosphoserine. The segment covering Glu1013 to Gln1023 has biased composition (basic and acidic residues).

As to quaternary structure, interacts with PPP1CC. Post-translationally, phosphorylated by CDK1. May regulate its subcellular location. As to expression, ubiquitously expressed.

The protein resides in the nucleus. Regulator of chromosome structure during mitosis required for condensin-depleted chromosomes to retain their compact architecture through anaphase. Acts by mediating the recruitment of phopsphatase PP1-gamma subunit (PPP1CC) to chromatin at anaphase and into the following interphase. At anaphase onset, its association with chromatin targets a pool of PPP1CC to dephosphorylate substrates. The polypeptide is Cell division cycle-associated protein 2 (CDCA2) (Homo sapiens (Human)).